The following is a 333-amino-acid chain: Nucleoid-associated protein PSPTO_1265 (333 aa).

It belongs to the YejK family.

The protein localises to the cytoplasm. The protein resides in the nucleoid. This Pseudomonas syringae pv. tomato (strain ATCC BAA-871 / DC3000) protein is Nucleoid-associated protein PSPTO_1265.